The following is a 567-amino-acid chain: Low-affinity glucose transporter (567 aa).

The span at 1-24 (MSNQMTDSTSAGSGTEHSVDTNTA) shows a compositional bias: polar residues. A disordered region spans residues 1-36 (MSNQMTDSTSAGSGTEHSVDTNTALKAGSPNDLKVS). Residues 18–62 (SVDTNTALKAGSPNDLKVSHEEDLNDLEKTAEETLQQKPAKEYIF) lie on the Cytoplasmic side of the membrane. The chain crosses the membrane as a helical span at residues 63–83 (VSLCCVMVAFGGFVFGWDTGT). Residues 84-113 (ISGFVNQTDFLRRFGQEKADGSHYLSNVRT) are Extracellular-facing. An N-linked (GlcNAc...) asparagine glycan is attached at asparagine 89. The chain crosses the membrane as a helical span at residues 114 to 134 (GLIVSIFNIGCAVGGIVLSNI). The Cytoplasmic portion of the chain corresponds to 135–141 (GDRWGRR). A helical membrane pass occupies residues 142 to 162 (IGLITVIIIYVIGIIIQIASV). Residues 163–167 (DKWYQ) are Extracellular-facing. The helical transmembrane segment at 168-188 (YFIGRIISGLGVGGITVLSPM) threads the bilayer. The Cytoplasmic segment spans residues 189–199 (LISETAPKHLR). Residues 200–220 (GTLVSCYQLMITFGIFLGYCT) form a helical membrane-spanning segment. Residues 221–234 (NYGTKNYSNSVQWR) are Extracellular-facing. The helical transmembrane segment at 235 to 255 (VPLGLCFAWAIFMVLGMMFVP) threads the bilayer. At 256–334 (ESARFLVETD…MGIMIQSLQQ (79 aa)) the chain is on the cytoplasmic side. Residues 335-354 (LTGDNYFFYYGTTIFQSVGM) traverse the membrane as a helical segment. Topologically, residues 355–358 (DDSF) are extracellular. The helical transmembrane segment at 359–379 (ETSIVLGIVNFASTFFALYTV) threads the bilayer. Over 380–386 (DHFGRRN) the chain is Cytoplasmic. Residues 387–407 (CLLYGCVGMVACYVVYASVGV) form a helical membrane-spanning segment. At 408–429 (TRLWPDGPDHPDISSKGAGNCM) the chain is on the extracellular side. The helical transmembrane segment at 430–450 (IVFACFYIFCFATTWAPIAYV) threads the bilayer. Residues 451–466 (VISESYPLRVKGKAMA) lie on the Cytoplasmic side of the membrane. The helical transmembrane segment at 467 to 487 (IASASNWIWGFLIGFFTPFIT) threads the bilayer. Over 488–493 (SAIHFY) the chain is Extracellular. The helical transmembrane segment at 494-514 (YGYVFMGCMVFAFFYVYFFVP) threads the bilayer. Topologically, residues 515-567 (ETKGLTLEEVNEMYSEGVLPWKSSSWVPSSRRGAEYDVDALQHDDKPWYKAML) are cytoplasmic.

This sequence belongs to the major facilitator superfamily. Sugar transporter (TC 2.A.1.1) family.

Its subcellular location is the membrane. Its function is as follows. Low-affinity glucose transporter. The protein is Low-affinity glucose transporter (RAG1) of Kluyveromyces lactis (strain ATCC 8585 / CBS 2359 / DSM 70799 / NBRC 1267 / NRRL Y-1140 / WM37) (Yeast).